Reading from the N-terminus, the 476-residue chain is Mitochondrial-processing peptidase subunit beta (476 aa).

A mitochondrion-targeting transit peptide spans 1-28 (MASRRLALNLAQGVKARAGGVINPFRRG). Histidine 84 contributes to the Zn(2+) binding site. Catalysis depends on glutamate 87, which acts as the Proton acceptor. Zn(2+)-binding residues include histidine 88 and glutamate 164.

Belongs to the peptidase M16 family. As to quaternary structure, heterodimer of mpp (alpha) and pep (beta) subunits, forming the mitochondrial processing protease (MPP) in which mpp is involved in substrate recognition and binding and pep is the catalytic subunit. Component of the ubiquinol-cytochrome c oxidoreductase (cytochrome b-c1 complex, complex III, CIII), a multisubunit enzyme composed of 10 subunits. The complex is composed of 3 respiratory subunits cytochrome b (cob), cytochrome c1 (cyt-1) and Rieske protein (fes-1), 2 core protein subunits pep and ucr-1, and 5 low-molecular weight protein subunits qcr6, qcr7, qcr8, qcr9 and probably NCU16844/qcr10. The complex exists as an obligatory dimer and forms supercomplexes (SCs) in the inner mitochondrial membrane with NADH-ubiquinone oxidoreductase (complex I, CI) and cytochrome c oxidase (complex IV, CIV), resulting in different assemblies (supercomplexes SCI(1)III(2), SCIII(2)IV(1) and SCIII(2)IV(2) as well as higher order I(x)III(y)IV(z) megacomplexes). Zn(2+) serves as cofactor.

It localises to the mitochondrion matrix. The protein localises to the mitochondrion inner membrane. The catalysed reaction is Release of N-terminal transit peptides from precursor proteins imported into the mitochondrion, typically with Arg in position P2.. Binding to mpp is required for catalytic activity. Inhibited by metal chelator ethylenediaminetetraacetic acid (EDTA). Catalytic subunit of the essential mitochondrial processing protease (MPP), which cleaves the mitochondrial sequence off newly imported precursors proteins. Preferentially, cleaves after an arginine at position P2. In terms of biological role, component of the ubiquinol-cytochrome c oxidoreductase, a multisubunit transmembrane complex that is part of the mitochondrial electron transport chain which drives oxidative phosphorylation. The respiratory chain contains 3 multisubunit complexes succinate dehydrogenase (complex II, CII), ubiquinol-cytochrome c oxidoreductase (cytochrome b-c1 complex, complex III, CIII) and cytochrome c oxidase (complex IV, CIV), that cooperate to transfer electrons derived from NADH and succinate to molecular oxygen, creating an electrochemical gradient over the inner membrane that drives transmembrane transport and the ATP synthase. The cytochrome b-c1 complex catalyzes electron transfer from ubiquinol to cytochrome c, linking this redox reaction to translocation of protons across the mitochondrial inner membrane, with protons being carried across the membrane as hydrogens on the quinol. In the process called Q cycle, 2 protons are consumed from the matrix, 4 protons are released into the intermembrane space and 2 electrons are passed to cytochrome c. This Neurospora crassa (strain ATCC 24698 / 74-OR23-1A / CBS 708.71 / DSM 1257 / FGSC 987) protein is Mitochondrial-processing peptidase subunit beta.